Here is a 242-residue protein sequence, read N- to C-terminus: ATP synthase subunit a (242 aa).

6 consecutive transmembrane segments (helical) span residues 31 to 51 (IYML…FYNW), 84 to 104 (FIPL…LGMT), 114 to 134 (IIVT…VGFV), 140 to 160 (FLTL…MIVI), 189 to 209 (VIAS…IPLM), and 210 to 230 (VILI…FTIL).

Belongs to the ATPase A chain family. In terms of assembly, F-type ATPases have 2 components, CF(1) - the catalytic core - and CF(0) - the membrane proton channel. CF(1) has five subunits: alpha(3), beta(3), gamma(1), delta(1), epsilon(1). CF(0) has three main subunits: a(1), b(2) and c(9-12). The alpha and beta chains form an alternating ring which encloses part of the gamma chain. CF(1) is attached to CF(0) by a central stalk formed by the gamma and epsilon chains, while a peripheral stalk is formed by the delta and b chains.

The protein resides in the cell inner membrane. In terms of biological role, key component of the proton channel; it plays a direct role in the translocation of protons across the membrane. The sequence is that of ATP synthase subunit a from Rickettsia canadensis (strain McKiel).